Reading from the N-terminus, the 299-residue chain is Taste receptor type 2 member 4 (299 aa).

The Extracellular portion of the chain corresponds to 1-9; that stretch reads MLRLFYFSA. The chain crosses the membrane as a helical span at residues 10 to 30; that stretch reads IIASVILNFVGIIMNLFITVV. Residues 31–46 are Cytoplasmic-facing; it reads NCKTWVKSHRISSSDR. Residues 47–67 traverse the membrane as a helical segment; the sequence is ILFSLGITRFLMLGLFLVNTI. The Extracellular segment spans residues 68 to 81; it reads YFVSSNTERSVYLS. The chain crosses the membrane as a helical span at residues 82–102; that stretch reads AFFVLCFMFLDSSSLWFVTLL. Over 103–131 the chain is Cytoplasmic; the sequence is NILYCVKITNFQHSVFLLLKRNISPKIPR. Residues 132–152 form a helical membrane-spanning segment; the sequence is LLLACVLISAFTTCLYITLSQ. The Extracellular segment spans residues 153–172; it reads ASPFPELVTTRNNTSFNINE. N-linked (GlcNAc...) asparagine glycosylation is found at Asn-164 and Asn-165. Residues 173–193 traverse the membrane as a helical segment; it reads GILSLVVSLVLSSSLQFIINV. Residues 194–230 are Cytoplasmic-facing; the sequence is TSASLLIHSLRRHIQKMQKNATGFWNPQTEAHVGAMK. The chain crosses the membrane as a helical span at residues 231–251; it reads LMVYFLILYIPYSVATLVQYL. Residues 252–262 lie on the Extracellular side of the membrane; the sequence is PFYAGMDMGTK. A helical membrane pass occupies residues 263–283; that stretch reads SICLIFATLYSPGHSVLIIIT. Topologically, residues 284–299 are cytoplasmic; that stretch reads HPKLKTTAKKILCFKK.

The protein belongs to the G-protein coupled receptor T2R family.

Its subcellular location is the membrane. The protein localises to the cell projection. The protein resides in the cilium membrane. Gustducin-coupled receptor implicated in the perception of bitter compounds in the oral cavity and the gastrointestinal tract. Signals through PLCB2 and the calcium-regulated cation channel TRPM5. In airway epithelial cells, binding of denatonium increases the intracellular calcium ion concentration and stimulates ciliary beat frequency. The polypeptide is Taste receptor type 2 member 4 (TAS2R4) (Pan paniscus (Pygmy chimpanzee)).